Consider the following 496-residue polypeptide: Fascin (496 aa).

It belongs to the fascin family.

It is found in the cytoplasm. The protein localises to the cytoskeleton. Functionally, acts as an actin bundling protein. In Strongylocentrotus purpuratus (Purple sea urchin), this protein is Fascin.